The primary structure comprises 314 residues: 1D-myo-inositol 2-acetamido-2-deoxy-alpha-D-glucopyranoside deacetylase 2 (314 aa).

Histidine 25, aspartate 28, and histidine 161 together coordinate Zn(2+).

It belongs to the MshB deacetylase family. Requires Zn(2+) as cofactor.

It carries out the reaction 1D-myo-inositol 2-acetamido-2-deoxy-alpha-D-glucopyranoside + H2O = 1D-myo-inositol 2-amino-2-deoxy-alpha-D-glucopyranoside + acetate. Its function is as follows. Catalyzes the deacetylation of 1D-myo-inositol 2-acetamido-2-deoxy-alpha-D-glucopyranoside (GlcNAc-Ins) in the mycothiol biosynthesis pathway. The polypeptide is 1D-myo-inositol 2-acetamido-2-deoxy-alpha-D-glucopyranoside deacetylase 2 (Frankia casuarinae (strain DSM 45818 / CECT 9043 / HFP020203 / CcI3)).